Consider the following 325-residue polypeptide: L-lactate dehydrogenase (325 aa).

NAD(+) is bound by residues Val-21, Asp-42, Lys-47, Tyr-73, and 87–88 (GA). Residues Gln-90, Arg-96, and 128–131 (NPVD) contribute to the substrate site. NAD(+)-binding positions include 126–128 (ATN) and Ser-151. 156 to 159 (DTAR) contributes to the substrate binding site. Arg-161 and His-176 together coordinate beta-D-fructose 1,6-bisphosphate. The active-site Proton acceptor is the His-183. A Phosphotyrosine modification is found at Tyr-228. Position 237 (Thr-237) interacts with substrate.

It belongs to the LDH/MDH superfamily. LDH family. In terms of assembly, homotetramer.

The protein localises to the cytoplasm. The catalysed reaction is (S)-lactate + NAD(+) = pyruvate + NADH + H(+). Its pathway is fermentation; pyruvate fermentation to lactate; (S)-lactate from pyruvate: step 1/1. Allosterically activated by fructose 1,6-bisphosphate (FBP). Functionally, catalyzes the conversion of lactate to pyruvate. This chain is L-lactate dehydrogenase, found in Shouchella clausii (strain KSM-K16) (Alkalihalobacillus clausii).